We begin with the raw amino-acid sequence, 254 residues long: 5'-nucleotidase SurE (254 aa).

Residues Asp-8, Asp-9, Ser-40, and Asn-93 each coordinate a divalent metal cation.

Belongs to the SurE nucleotidase family. A divalent metal cation is required as a cofactor.

The protein resides in the cytoplasm. The catalysed reaction is a ribonucleoside 5'-phosphate + H2O = a ribonucleoside + phosphate. Its function is as follows. Nucleotidase that shows phosphatase activity on nucleoside 5'-monophosphates. This Methylorubrum populi (strain ATCC BAA-705 / NCIMB 13946 / BJ001) (Methylobacterium populi) protein is 5'-nucleotidase SurE.